Here is a 1408-residue protein sequence, read N- to C-terminus: Protein patched homolog 1 (1408 aa).

Positions 1-20 are disordered; the sequence is MLTLLEPPGAKRSPTVGNYN. Residues 1–136 are Cytoplasmic-facing; sequence MLTLLEPPGA…GNTVHRNAWS (136 aa). The helical transmembrane segment at 137-157 threads the bilayer; the sequence is IILAVSMIFAVCCYGLQYVHI. The Extracellular portion of the chain corresponds to 158–649; the sequence is ETDIVKLWVA…STSIADMLEE (492 aa). The interval 455 to 479 is disordered; that stretch reads STAPIPTTTTLSPEEARAAEEKEKK. A compositionally biased stretch (basic and acidic residues) spans 468–479; sequence EEARAAEEKEKK. An N-linked (GlcNAc...) asparagine glycan is attached at asparagine 599. The chain crosses the membrane as a helical span at residues 650 to 670; that stretch reads FCQFNYTIILAGYALMLAYAI. Residues 654–816 enclose the SSD domain; sequence NYTIILAGYA…LTIYPAIISI (163 aa). Residues 671–686 are Cytoplasmic-facing; it reads VTQARFDNCLPATESS. Residues 687 to 707 traverse the membrane as a helical segment; it reads MGLALAGVLVVTFASVAGLGL. Topologically, residues 708-709 are extracellular; the sequence is AT. Residues 710–730 form a helical membrane-spanning segment; it reads WFGIEFNAATTQIVPFLTLGI. At 731–765 the chain is on the cytoplasmic side; that stretch reads GVDNMFMLLHNYRDVVKLAGGHAEMAILMRETGMS. Residues 766–786 form a helical membrane-spanning segment; sequence ILCTSINNILSFLTGTLLPIP. Residues 787 to 795 are Extracellular-facing; it reads ALRSFCAQS. Residues 796–816 traverse the membrane as a helical segment; the sequence is SILLTFNFIAILTIYPAIISI. At 817 to 901 the chain is on the cytoplasmic side; that stretch reads DLRRKKAQRR…YYYIPFISKP (85 aa). A helical transmembrane segment spans residues 902 to 922; that stretch reads ASKVAIIVGCCALLGASFIGM. Residues 923–1175 are Extracellular-facing; the sequence is RQSTLGLELG…QGIAFTFWEQ (253 aa). 2 N-linked (GlcNAc...) asparagine glycosylation sites follow: asparagine 1026 and asparagine 1036. A helical transmembrane segment spans residues 1176-1196; sequence YLFLTGNLMQAISIITISVFC. Residues 1197-1217 lie on the Cytoplasmic side of the membrane; that stretch reads VISVLLFNPWAALMVVCILGI. 2 helical membrane-spanning segments follow: residues 1218–1238 and 1239–1259; these read MTCELAGFMGLVGIKLNPVSA and VTLITAVGIGVEFTVHVVVSF. Topologically, residues 1260 to 1276 are extracellular; sequence LTALGTRSQRTSSAVDR. Residues 1277-1297 form a helical membrane-spanning segment; that stretch reads VFVPVIHGSFSTLLGILMLGF. Residues 1298–1305 lie on the Cytoplasmic side of the membrane; the sequence is SEFEFVVK. A helical transmembrane segment spans residues 1306–1326; the sequence is YFFIVMTALICIGIINGLILL. Over 1327 to 1408 the chain is Extracellular; the sequence is PVLLSWFGPR…GNNTRRLPAV (82 aa). Residues 1342–1408 are disordered; that stretch reads TGGKTTLTLP…GNNTRRLPAV (67 aa). The span at 1387–1408 shows a compositional bias: low complexity; that stretch reads TTRTSGGNRGTVGNNTRRLPAV.

It belongs to the patched family. Germ line and its progenitors.

The protein resides in the membrane. Its function is as follows. Required but not essential for cytokinesis of mitotically proliferating germ cells. This is Protein patched homolog 1 (ptc-1) from Caenorhabditis elegans.